A 361-amino-acid polypeptide reads, in one-letter code: Protein Csal_2339 (361 aa).

S91 (proton acceptor) is an active-site residue. Substrate is bound by residues 92–93 (GS) and 259–260 (GT).

The protein belongs to the proline racemase family.

The catalysed reaction is trans-4-hydroxy-L-proline = cis-4-hydroxy-D-proline. Its function is as follows. In vitro, catalyzes the epimerization of trans-4-hydroxy-L-proline (t4LHyp) to cis-4-hydroxy-D-proline (c4DHyp), albeit with very low efficiency. The physiological substrate may be different. Displays neither proline racemase activity nor t3LHyp dehydratase activity. In Chromohalobacter salexigens (strain ATCC BAA-138 / DSM 3043 / CIP 106854 / NCIMB 13768 / 1H11), this protein is Protein Csal_2339.